Here is a 261-residue protein sequence, read N- to C-terminus: Tryptophan synthase alpha chain (261 aa).

Residues Glu-47 and Asp-58 each act as proton acceptor in the active site.

The protein belongs to the TrpA family. In terms of assembly, tetramer of two alpha and two beta chains.

It carries out the reaction (1S,2R)-1-C-(indol-3-yl)glycerol 3-phosphate + L-serine = D-glyceraldehyde 3-phosphate + L-tryptophan + H2O. Its pathway is amino-acid biosynthesis; L-tryptophan biosynthesis; L-tryptophan from chorismate: step 5/5. Its function is as follows. The alpha subunit is responsible for the aldol cleavage of indoleglycerol phosphate to indole and glyceraldehyde 3-phosphate. This is Tryptophan synthase alpha chain from Neisseria meningitidis serogroup A / serotype 4A (strain DSM 15465 / Z2491).